Here is a 247-residue protein sequence, read N- to C-terminus: Uridylate kinase (247 aa).

18–21 is an ATP binding site; the sequence is KLSG. Gly-60 contributes to the UMP binding site. Gly-61 and Arg-65 together coordinate ATP. UMP-binding positions include Asp-80 and 141 to 148; that span reads TGNPFFTT. Thr-168, Tyr-174, and Asp-177 together coordinate ATP.

It belongs to the UMP kinase family. As to quaternary structure, homohexamer.

Its subcellular location is the cytoplasm. The catalysed reaction is UMP + ATP = UDP + ADP. The protein operates within pyrimidine metabolism; CTP biosynthesis via de novo pathway; UDP from UMP (UMPK route): step 1/1. Inhibited by UTP. Its function is as follows. Catalyzes the reversible phosphorylation of UMP to UDP. This chain is Uridylate kinase, found in Stutzerimonas stutzeri (strain A1501) (Pseudomonas stutzeri).